Consider the following 1104-residue polypeptide: Lon protease homolog, mitochondrial (1104 aa).

The transit peptide at 1-54 (MLRGQTLRWRAALQTPRSLILRPLFAPGGYNVGPRSVLETSRRFRSLPPSLRTF) directs the protein to the mitochondrion. Disordered stretches follow at residues 41–192 (SRRF…KPSV) and 296–317 (SLIP…TEKR). 2 stretches are compositionally biased toward basic and acidic residues: residues 64–104 (KPPP…DSSG) and 125–144 (KAAD…EAEA). Over residues 158 to 169 (SDSSSESKPSGS) the composition is skewed to low complexity. Composition is skewed to basic and acidic residues over residues 172 to 187 (GGDD…DKAL) and 308 to 317 (NSEDKTTEKR). The Lon N-terminal domain occupies 199–451 (VMAIPIAKRP…KGLVVLKKEL (253 aa)). Residue 604-611 (GPPGVGKT) coordinates ATP. Residues 825–839 (AEGKAAQEESEKETG) show a composition bias toward basic and acidic residues. The disordered stretch occupies residues 825–857 (AEGKAAQEESEKETGPIESTSEQEKATTENPRV). A Lon proteolytic domain is found at 891 to 1077 (TFPPGVTMGL…SEVFDILFAD (187 aa)). Active-site residues include serine 983 and lysine 1026.

This sequence belongs to the peptidase S16 family. As to quaternary structure, homohexamer or homoheptamer. Organized in a ring with a central cavity.

Its subcellular location is the mitochondrion matrix. The catalysed reaction is Hydrolysis of proteins in presence of ATP.. Functionally, ATP-dependent serine protease that mediates the selective degradation of misfolded, unassembled or oxidatively damaged polypeptides as well as certain short-lived regulatory proteins in the mitochondrial matrix. May also have a chaperone function in the assembly of inner membrane protein complexes. Participates in the regulation of mitochondrial gene expression and in the maintenance of the integrity of the mitochondrial genome. Binds to mitochondrial DNA in a site-specific manner. The polypeptide is Lon protease homolog, mitochondrial (pim1) (Emericella nidulans (strain FGSC A4 / ATCC 38163 / CBS 112.46 / NRRL 194 / M139) (Aspergillus nidulans)).